The following is a 490-amino-acid chain: Doublesex- and mab-3-related transcription factor A1 (490 aa).

Residues 1–13 (MERLPHGRRDRSG) show a composition bias toward basic and acidic residues. The interval 1–31 (MERLPHGRRDRSGGCRPHLAPGRAAAPASAA) is disordered. Positions 20–31 (APGRAAAPASAA) are enriched in low complexity. Positions 86 to 133 (CARCRNHGVVSALKGHKRFCRWRDCACAKCTLIAERQRVMAAQVALRR) form a DNA-binding region, DM. Disordered stretches follow at residues 152–171 (GSSG…ESPQ) and 207–289 (DRKQ…DLES). The segment covering 207–216 (DRKQEPKQRN) has biased composition (basic and acidic residues). 2 stretches are compositionally biased toward polar residues: residues 217–242 (CESC…SKGN) and 269–289 (PTDQ…DLES). In terms of domain architecture, DMA spans 314-349 (RDPLGILTRIFPGYKHSRLEGILQFCKGDVVQAIEQ).

Belongs to the DMRT family. Widely expressed, with highest levels in ovary, testis, epididymis, preputial gland, vomeronasal organ, liver, salivary glands and heart. Also expressed throughout the brain with highest levels in the olfactory bulbs and medulla. Detected at similar levels in gonads of both sexes.

The protein resides in the nucleus. The sequence is that of Doublesex- and mab-3-related transcription factor A1 (Dmrta1) from Mus musculus (Mouse).